The following is a 209-amino-acid chain: Max dimerization protein 4 (209 aa).

The tract at residues 6 to 23 is interaction with SIN3A and SIN3B; it reads LLLLLEAAEYLERRDREA. Residues 53 to 105 enclose the bHLH domain; the sequence is NNRSSHNELEKHRRAKLRLYLEQLKQLGPLGPDSTRHTTLSLLKRAKMHIKKL. The interval 137-209 is disordered; it reads SVERVRTDST…CRRPGCPGLS (73 aa). Residues 153 to 163 are compositionally biased toward acidic residues; that stretch reads DDSEQEVDIEG. Residues 185-195 show a composition bias toward polar residues; sequence SLQSSGCSDSS.

As to quaternary structure, efficient DNA binding requires dimerization with another bHLH protein. Binds DNA as a heterodimer with MAX. Interacts with SIN3A AND SIN3B. Interacts with RNF17.

It is found in the nucleus. In terms of biological role, transcriptional repressor. Binds with MAX to form a sequence-specific DNA-binding protein complex which recognizes the core sequence 5'-CAC[GA]TG-3'. Antagonizes MYC transcriptional activity by competing for MAX and suppresses MYC dependent cell transformation. In Mus musculus (Mouse), this protein is Max dimerization protein 4 (Mxd4).